Here is a 178-residue protein sequence, read N- to C-terminus: Small ribosomal subunit protein uS4 (178 aa).

The 63-residue stretch at 104 to 166 (RRLQTIVFRK…SNSPMASENH (63 aa)) folds into the S4 RNA-binding domain. A disordered region spans residues 158–178 (NSPMASENHPERTAATSEENQ).

It belongs to the universal ribosomal protein uS4 family. As to quaternary structure, part of the 30S ribosomal subunit. Contacts protein S5. The interaction surface between S4 and S5 is involved in control of translational fidelity.

Its function is as follows. One of the primary rRNA binding proteins, it binds directly to 16S rRNA where it nucleates assembly of the body of the 30S subunit. With S5 and S12 plays an important role in translational accuracy. In Methanococcus maripaludis (strain DSM 14266 / JCM 13030 / NBRC 101832 / S2 / LL), this protein is Small ribosomal subunit protein uS4.